Consider the following 334-residue polypeptide: Glyceraldehyde-3-phosphate dehydrogenase 1 (334 aa).

NAD(+) is bound by residues R11–I12, D33, R77, and S119. D-glyceraldehyde 3-phosphate contacts are provided by residues S150–T152 and T181. C151 acts as the Nucleophile in catalysis. N182 is a binding site for NAD(+). D-glyceraldehyde 3-phosphate contacts are provided by residues R196, T209–G210, and R232. N314 is an NAD(+) binding site.

It belongs to the glyceraldehyde-3-phosphate dehydrogenase family. In terms of assembly, homotetramer.

Its subcellular location is the cytoplasm. It carries out the reaction D-glyceraldehyde 3-phosphate + phosphate + NAD(+) = (2R)-3-phospho-glyceroyl phosphate + NADH + H(+). The protein operates within carbohydrate degradation; glycolysis; pyruvate from D-glyceraldehyde 3-phosphate: step 1/5. Catalyzes the oxidative phosphorylation of glyceraldehyde 3-phosphate (G3P) to 1,3-bisphosphoglycerate (BPG) using the cofactor NAD. The first reaction step involves the formation of a hemiacetal intermediate between G3P and a cysteine residue, and this hemiacetal intermediate is then oxidized to a thioester, with concomitant reduction of NAD to NADH. The reduced NADH is then exchanged with the second NAD, and the thioester is attacked by a nucleophilic inorganic phosphate to produce BPG. This Bacillus cereus protein is Glyceraldehyde-3-phosphate dehydrogenase 1 (gap1).